A 503-amino-acid chain; its full sequence is 2,3-bisphosphoglycerate-independent phosphoglycerate mutase (503 aa).

Positions 10 and 60 each coordinate Mn(2+). Residue S60 is the Phosphoserine intermediate of the active site. Substrate contacts are provided by residues H121, 150–151, R181, R187, 256–259, and K330; these read RD and RPDR. Residues D396, H400, D437, H438, and H455 each coordinate Mn(2+).

This sequence belongs to the BPG-independent phosphoglycerate mutase family. As to quaternary structure, monomer. Mn(2+) is required as a cofactor.

It catalyses the reaction (2R)-2-phosphoglycerate = (2R)-3-phosphoglycerate. Its pathway is carbohydrate degradation; glycolysis; pyruvate from D-glyceraldehyde 3-phosphate: step 3/5. Its function is as follows. Catalyzes the interconversion of 2-phosphoglycerate and 3-phosphoglycerate. The protein is 2,3-bisphosphoglycerate-independent phosphoglycerate mutase of Mycoplasmoides gallisepticum (strain R(low / passage 15 / clone 2)) (Mycoplasma gallisepticum).